The following is a 307-amino-acid chain: Porphobilinogen deaminase (307 aa).

The residue at position 239 (Cys239) is an S-(dipyrrolylmethanemethyl)cysteine.

Belongs to the HMBS family. Monomer. It depends on dipyrromethane as a cofactor.

It catalyses the reaction 4 porphobilinogen + H2O = hydroxymethylbilane + 4 NH4(+). It participates in porphyrin-containing compound metabolism; protoporphyrin-IX biosynthesis; coproporphyrinogen-III from 5-aminolevulinate: step 2/4. Functionally, tetrapolymerization of the monopyrrole PBG into the hydroxymethylbilane pre-uroporphyrinogen in several discrete steps. The polypeptide is Porphobilinogen deaminase (Campylobacter jejuni subsp. doylei (strain ATCC BAA-1458 / RM4099 / 269.97)).